Consider the following 332-residue polypeptide: 2,3-diketo-L-gulonate reductase (332 aa).

Histidine 44 acts as the Proton donor in catalysis. NAD(+)-binding positions include 168–174 (ITMVDMS), 224–225 (WK), and 304–306 (GHE).

It belongs to the LDH2/MDH2 oxidoreductase family. DlgD subfamily. In terms of assembly, homodimer.

It is found in the cytoplasm. The enzyme catalyses 3-dehydro-L-gulonate + NAD(+) = 2,3-dioxo-L-gulonate + NADH + H(+). It carries out the reaction 3-dehydro-L-gulonate + NADP(+) = 2,3-dioxo-L-gulonate + NADPH + H(+). Its function is as follows. Catalyzes the reduction of 2,3-diketo-L-gulonate in the presence of NADH, to form 3-keto-L-gulonate. This Escherichia coli O17:K52:H18 (strain UMN026 / ExPEC) protein is 2,3-diketo-L-gulonate reductase.